A 499-amino-acid polypeptide reads, in one-letter code: Glucose-6-phosphate isomerase (499 aa).

The Proton donor role is filled by Glu352. Catalysis depends on residues His383 and Lys487.

The protein belongs to the GPI family.

The protein localises to the cytoplasm. It catalyses the reaction alpha-D-glucose 6-phosphate = beta-D-fructose 6-phosphate. The protein operates within carbohydrate biosynthesis; gluconeogenesis. It functions in the pathway carbohydrate degradation; glycolysis; D-glyceraldehyde 3-phosphate and glycerone phosphate from D-glucose: step 2/4. Functionally, catalyzes the reversible isomerization of glucose-6-phosphate to fructose-6-phosphate. The chain is Glucose-6-phosphate isomerase from Legionella pneumophila (strain Paris).